The sequence spans 215 residues: 3-demethoxyubiquinol 3-hydroxylase (215 aa).

6 residues coordinate Fe cation: Glu-64, Glu-94, His-97, Glu-146, Glu-178, and His-181.

The protein belongs to the COQ7 family. Requires Fe cation as cofactor.

Its subcellular location is the cell membrane. The enzyme catalyses a 5-methoxy-2-methyl-3-(all-trans-polyprenyl)benzene-1,4-diol + AH2 + O2 = a 3-demethylubiquinol + A + H2O. It functions in the pathway cofactor biosynthesis; ubiquinone biosynthesis. Its function is as follows. Catalyzes the hydroxylation of 2-nonaprenyl-3-methyl-6-methoxy-1,4-benzoquinol during ubiquinone biosynthesis. This is 3-demethoxyubiquinol 3-hydroxylase from Coxiella burnetii (strain CbuG_Q212) (Coxiella burnetii (strain Q212)).